A 249-amino-acid polypeptide reads, in one-letter code: Triosephosphate isomerase (249 aa).

Residues asparagine 10 and lysine 12 each coordinate substrate. Histidine 94 (electrophile) is an active-site residue. Glutamate 166 acts as the Proton acceptor in catalysis.

The protein belongs to the triosephosphate isomerase family. As to quaternary structure, homodimer.

The catalysed reaction is D-glyceraldehyde 3-phosphate = dihydroxyacetone phosphate. Its pathway is carbohydrate biosynthesis; gluconeogenesis. It participates in carbohydrate degradation; glycolysis; D-glyceraldehyde 3-phosphate from glycerone phosphate: step 1/1. This chain is Triosephosphate isomerase (tpiA), found in Emericella nidulans (strain FGSC A4 / ATCC 38163 / CBS 112.46 / NRRL 194 / M139) (Aspergillus nidulans).